The following is a 404-amino-acid chain: Glutamate-pyruvate aminotransferase AlaA (404 aa).

The L-alanine site is built by Gly-41 and Asn-179. N6-(pyridoxal phosphate)lysine is present on Lys-240. Arg-378 contacts L-alanine.

The protein belongs to the class-I pyridoxal-phosphate-dependent aminotransferase family. Homodimer. Pyridoxal 5'-phosphate serves as cofactor.

It catalyses the reaction L-alanine + 2-oxoglutarate = pyruvate + L-glutamate. Its pathway is amino-acid biosynthesis; L-alanine biosynthesis. Involved in the biosynthesis of alanine. Catalyzes the transamination of pyruvate by glutamate, leading to the formation of L-alanine and 2-oxoglutarate. Is also able to catalyze the reverse reaction. This Haemophilus influenzae (strain ATCC 51907 / DSM 11121 / KW20 / Rd) protein is Glutamate-pyruvate aminotransferase AlaA (alaA).